A 380-amino-acid polypeptide reads, in one-letter code: Genome polyprotein (380 aa).

Disordered regions lie at residues 54 to 154 (GTVD…TGKI) and 349 to 380 (GNVG…QQHH). Residues 67-84 (QGTTPPATGSGAKPATSG) show a composition bias toward low complexity. Composition is skewed to gly residues over residues 85 to 99 (AGSG…GVTG) and 106 to 123 (SGTG…GSGS). The span at 129–140 (NTGSAGTNATGG) shows a compositional bias: low complexity.

This sequence belongs to the potyviridae genome polyprotein family. In terms of processing, genome polyprotein of potyviruses undergoes post-translational proteolytic processing by the main proteinase NIa-pro resulting in the production of at least ten individual proteins. The P1 proteinase and the HC-pro cleave only their respective C-termini autocatalytically. 6K1 is essential for proper proteolytic separation of P3 from CI.

The protein resides in the virion. It carries out the reaction RNA(n) + a ribonucleoside 5'-triphosphate = RNA(n+1) + diphosphate. Functionally, an RNA-dependent RNA polymerase that plays an essential role in the virus replication. In terms of biological role, involved in aphid transmission, cell-to-cell and systemis movement, encapsidation of the viral RNA and in the regulation of viral RNA amplification. The chain is Genome polyprotein from Sorghum halepense (Johnson grass).